Consider the following 201-residue polypeptide: Retinol-binding protein 4 (201 aa).

Positions 1–18 (MEWVWALVLLAALGSGRG) are cleaved as a signal peptide. Disulfide bonds link cysteine 22/cysteine 178, cysteine 88/cysteine 192, and cysteine 138/cysteine 147. Glutamine 116 provides a ligand contact to substrate. Arginine 139 carries the omega-N-methylarginine modification.

Belongs to the calycin superfamily. Lipocalin family. Interacts with TTR. Interaction with TTR prevents its loss by filtration through the kidney glomeruli. Interacts with STRA6.

The protein localises to the secreted. Retinol-binding protein that mediates retinol transport in blood plasma. Delivers retinol from the liver stores to the peripheral tissues. Transfers the bound all-trans retinol to STRA6, that then facilitates retinol transport across the cell membrane. The sequence is that of Retinol-binding protein 4 (RBP4) from Oryctolagus cuniculus (Rabbit).